The chain runs to 139 residues: Large ribosomal subunit protein uL16 (139 aa).

It belongs to the universal ribosomal protein uL16 family. In terms of assembly, part of the 50S ribosomal subunit.

In terms of biological role, binds 23S rRNA and is also seen to make contacts with the A and possibly P site tRNAs. In Rippkaea orientalis (strain PCC 8801 / RF-1) (Cyanothece sp. (strain PCC 8801)), this protein is Large ribosomal subunit protein uL16.